Here is a 343-residue protein sequence, read N- to C-terminus: Flavone 3'-O-methyltransferase OMT2 (343 aa).

N107 contributes to the (E)-ferulate binding site. Residues G184, D207, D227, M228, M240, and K241 each coordinate S-adenosyl-L-homocysteine. The Proton acceptor role is filled by H245. D246 contributes to the (E)-5-hydroxyferulate binding site. Catalysis depends on residues E273 and E305.

It belongs to the class I-like SAM-binding methyltransferase superfamily. Cation-independent O-methyltransferase family. COMT subfamily. Homodimer.

It carries out the reaction (E)-5-hydroxyferulate + S-adenosyl-L-methionine = (E)-sinapate + S-adenosyl-L-homocysteine + H(+). It catalyses the reaction luteolin + S-adenosyl-L-methionine = chrysoeriol + S-adenosyl-L-homocysteine + H(+). The catalysed reaction is quercetin + S-adenosyl-L-methionine = isorhamnetin + S-adenosyl-L-homocysteine + H(+). The enzyme catalyses (E)-caffeate + S-adenosyl-L-methionine = (E)-ferulate + S-adenosyl-L-homocysteine + H(+). It carries out the reaction a 3'-hydroxyflavone + S-adenosyl-L-methionine = a 3'-methoxyflavone + S-adenosyl-L-homocysteine + H(+). It participates in flavonoid metabolism. Catalyzes the 3'-O-methylation of the flavonoids luteolin and quercetin. Catalyzes the 3- of 5-O-methylation of the phenylpropanoids caffeate and 5-hydroxyferulate. Substrate preference is 5-hydroxyferulate &gt; luteolin &gt; quercetin &gt; caffeate. Apigenin, kempferol and 3,4-dimethylquercetin do not seem to be substrates for methylation. This Chrysosplenium americanum (American golden saxifrage) protein is Flavone 3'-O-methyltransferase OMT2.